A 327-amino-acid chain; its full sequence is Cysteine synthase (327 aa).

Lys-65 carries the post-translational modification N6-(pyridoxal phosphate)lysine. Pyridoxal 5'-phosphate is bound by residues Asn-95, 200-204 (GTGGT), and Ser-282.

The protein belongs to the cysteine synthase/cystathionine beta-synthase family. The cofactor is pyridoxal 5'-phosphate.

The enzyme catalyses O-acetyl-L-serine + hydrogen sulfide = L-cysteine + acetate. The protein operates within amino-acid biosynthesis; L-cysteine biosynthesis; L-cysteine from L-serine: step 2/2. This is Cysteine synthase (cysM) from Aquifex aeolicus (strain VF5).